The primary structure comprises 946 residues: Glycine dehydrogenase (decarboxylating) (946 aa).

N6-(pyridoxal phosphate)lysine is present on K700.

This sequence belongs to the GcvP family. In terms of assembly, the glycine cleavage system is composed of four proteins: P, T, L and H. The cofactor is pyridoxal 5'-phosphate.

It carries out the reaction N(6)-[(R)-lipoyl]-L-lysyl-[glycine-cleavage complex H protein] + glycine + H(+) = N(6)-[(R)-S(8)-aminomethyldihydrolipoyl]-L-lysyl-[glycine-cleavage complex H protein] + CO2. The glycine cleavage system catalyzes the degradation of glycine. The P protein binds the alpha-amino group of glycine through its pyridoxal phosphate cofactor; CO(2) is released and the remaining methylamine moiety is then transferred to the lipoamide cofactor of the H protein. In Pseudomonas fluorescens (strain SBW25), this protein is Glycine dehydrogenase (decarboxylating).